Here is a 201-residue protein sequence, read N- to C-terminus: Recombination protein RecR (201 aa).

The C4-type zinc finger occupies 60 to 75 (CKTCGNIDTQNPCTVC). Residues 83 to 178 (SIIVVVADVA…KVTRLAHGVP (96 aa)) form the Toprim domain.

Belongs to the RecR family.

In terms of biological role, may play a role in DNA repair. It seems to be involved in an RecBC-independent recombinational process of DNA repair. It may act with RecF and RecO. The protein is Recombination protein RecR of Rhodopseudomonas palustris (strain HaA2).